We begin with the raw amino-acid sequence, 528 residues long: Acid-sensing ion channel 1 (528 aa).

Topologically, residues 1–49 (MELKAEEEEVGGVQPVSIQAFASSSTLHGLAHIFSYERLSLKRALWALC) are cytoplasmic. Residues 50–66 (FLGSLAVLLCVCTERVQ) traverse the membrane as a helical segment. Residues 67–427 (YYFHYHHVTK…ETIEQKKAYE (361 aa)) lie on the Extracellular side of the membrane. 7 cysteine pairs are disulfide-bonded: C93–C194, C172–C179, C290–C367, C310–C363, C314–C361, C323–C345, and C325–C337. 2 N-linked (GlcNAc...) asparagine glycosylation sites follow: N368 and N395. A discontinuously helical transmembrane segment spans residues 428–458 (IAGLLGDIGGQMGLFIGASILTVLELFDYAY). The GAS motif; ion selectivity filter motif lies at 444 to 446 (GAS). Residues 459–528 (EVIKHKLCRR…ARGTFEDFTC (70 aa)) lie on the Cytoplasmic side of the membrane. A Phosphoserine; by PKA modification is found at S479. S499 is modified (phosphoserine).

It belongs to the amiloride-sensitive sodium channel (TC 1.A.6) family. ASIC1 subfamily. In terms of assembly, forms functional homotrimeric channels. Forms heterotrimers with other ASIC proteins, resulting in channels with distinct properties. Interacts with PICK1; regulates ASIC1 clustering in membranes. Interacts with STOM; alters heterotrimeric channels activity. PH-gating could be regulated by serine proteases. In terms of processing, phosphorylation by PKA regulates interaction with PICK1 and subcellular localization. Phosphorylation by PKC may regulate the channel. Expressed in neurons throughout the central and peripheral nervous system.

Its subcellular location is the cell membrane. The protein resides in the postsynaptic cell membrane. It is found in the cell projection. It localises to the dendrite. The enzyme catalyses Na(+)(in) = Na(+)(out). It catalyses the reaction K(+)(in) = K(+)(out). The catalysed reaction is Li(+)(in) = Li(+)(out). It carries out the reaction Ca(2+)(in) = Ca(2+)(out). Its activity is regulated as follows. Potentiated by FMRFamide-related neuropeptides, which are induced during inflammation and modulate pain responses. Inhibited by the diuretic drug amiloride. Spider venom psalmotoxin-1 inhibits the channel by locking it in its desensitized conformation. The homotrimeric channel is inhibited by the spider venom pi-theraphotoxin-Hm3a. Homotrimeric and heterotrimeric (with ASIC2 isoform 1) channels are inhibited by the snake venom mambalgin-1, which prevents proton-induced transitions from the resting closed state to the active and/or desensitized states. Inhibited by Texas coral snake toxin MitTx1. Functionally, forms voltage-independent, pH-gated trimeric sodium channels that act as postsynaptic excitatory receptors in the nervous system, playing a crucial role in regulating synaptic plasticity, learning, and memory. Upon extracellular pH drop this channel elicits transient, fast activating, and completely desensitizing inward currents. Displays high selectivity for sodium ions but can also permit the permeation of other cations. Regulates more or less directly intracellular calcium concentration and CaMKII phosphorylation, and thereby the density of dendritic spines. Modulates neuronal activity in the circuits underlying innate fear. Its function is as follows. Has high selectivity for sodium ions, but can also be permeable to other cations including calcium, lithium and potassium. In terms of biological role, produces acid activated currents with a reduced amplitude and inactivates faster. Has high selectivity for sodium ions but also supports a calcium-mediated current which is sustained and maintained as long as acidic conditions are present. Also potentially permeable to lithium and potassium. Has no measurable proton-gated sodium channel activity in vitro. In Homo sapiens (Human), this protein is Acid-sensing ion channel 1.